A 232-amino-acid chain; its full sequence is Ribose-5-phosphate isomerase A (232 aa).

Substrate is bound by residues 28–31, 83–86, and 96–99; these read TGST, DGAD, and KGGG. Glutamate 105 acts as the Proton acceptor in catalysis. Substrate is bound at residue lysine 123.

This sequence belongs to the ribose 5-phosphate isomerase family. Homodimer.

It carries out the reaction aldehydo-D-ribose 5-phosphate = D-ribulose 5-phosphate. It participates in carbohydrate degradation; pentose phosphate pathway; D-ribose 5-phosphate from D-ribulose 5-phosphate (non-oxidative stage): step 1/1. Functionally, catalyzes the reversible conversion of ribose-5-phosphate to ribulose 5-phosphate. This is Ribose-5-phosphate isomerase A from Rhodopseudomonas palustris (strain HaA2).